A 117-amino-acid polypeptide reads, in one-letter code: MSLETVPKDLRHLRACLLCSLVKTIDQFEYDGCDNCESYLQMKGNREMVYECTSSSFDGVIAMMSPEDSWVAKWQRIGNFKPGVYAVTVTGRLPPGVVRELKSRGVIYRSRDTAVKT.

The interaction with SUPT5H stretch occupies residues 1-40 (MSLETVPKDLRHLRACLLCSLVKTIDQFEYDGCDNCESYL). The C4-type zinc finger occupies 16-36 (CLLCSLVKTIDQFEYDGCDNC).

This sequence belongs to the SPT4 family. As to quaternary structure, interacts with SUPT5H to form the DSIF complex. DSIF interacts with RNA polymerase II and with the positive transcription elongation factor b complex (P-TEFb complex), which is composed of CDK9 and cyclin-T.

Its subcellular location is the nucleus. May function as a component of the DRB sensitivity-inducing factor complex (DSIF complex), which regulates transcription elongation by RNA polymerase II. Probably enhances transcriptional pausing at sites proximal to the promoter, which may facilitate the assembly of an elongation competent RNA polymerase II complex. Also acts to stimulate transcriptional elongation at low nucleotide concentrations. Regulation of transcriptional elongation by this protein is required for the expression of genes which control neuronal development. The sequence is that of Transcription elongation factor SPT4 (supt4h1) from Danio rerio (Zebrafish).